The following is a 376-amino-acid chain: Chaperone protein DnaJ (376 aa).

The region spanning 5–70 (DYYEVLGAAK…QKRAAYDQFG (66 aa)) is the J domain. A CR-type zinc finger spans residues 134-212 (GCDEKIRIPT…CGGQGRVQNT (79 aa)). Residues Cys-147, Cys-150, Cys-164, Cys-167, Cys-186, Cys-189, Cys-200, and Cys-203 each contribute to the Zn(2+) site. CXXCXGXG motif repeat units follow at residues 147–154 (CDVCHGSG), 164–171 (CTTCGGVG), 186–193 (CPTCKGEG), and 200–207 (CGNCGGQG).

This sequence belongs to the DnaJ family. As to quaternary structure, homodimer. Zn(2+) serves as cofactor.

The protein resides in the cytoplasm. Its function is as follows. Participates actively in the response to hyperosmotic and heat shock by preventing the aggregation of stress-denatured proteins and by disaggregating proteins, also in an autonomous, DnaK-independent fashion. Unfolded proteins bind initially to DnaJ; upon interaction with the DnaJ-bound protein, DnaK hydrolyzes its bound ATP, resulting in the formation of a stable complex. GrpE releases ADP from DnaK; ATP binding to DnaK triggers the release of the substrate protein, thus completing the reaction cycle. Several rounds of ATP-dependent interactions between DnaJ, DnaK and GrpE are required for fully efficient folding. Also involved, together with DnaK and GrpE, in the DNA replication of plasmids through activation of initiation proteins. The protein is Chaperone protein DnaJ of Alcanivorax borkumensis (strain ATCC 700651 / DSM 11573 / NCIMB 13689 / SK2).